Here is a 389-residue protein sequence, read N- to C-terminus: ELAV-like protein 2 (389 aa).

RRM domains lie at 66–145 (TNLI…YARP), 153–233 (ANLY…FANN), and 306–384 (WCIF…FKTS).

This sequence belongs to the RRM elav family. In terms of assembly, part of a ribonucleoprotein (RNP) complex, at least composed of elavl1/elrA and/or elavl2/elrB, igf2bp3/vg1RBP, ddx6/Xp54, ybx2/frgy2, lsm14b/rap55b and, in a subset of RNP complexes, stau1/staufen. Binds RNA as a homooligomer. Expressed in brain, testis and ovary. Ovarian expression is restricted to follicle cells surrounding the oocyte. From the early tailbud stage, expression is neural-specific and is seen in both the central and peripheral nervous system in differentiating neurons but not proliferating precursors. Expressed in the retina from stage 32 with expression becoming restricted to the ganglion cell layer by later stages.

The protein resides in the cytoplasm. Its subcellular location is the cell cortex. Its function is as follows. Binds to poly-U elements and AU-rich elements (AREs) in the 3'-UTR of target mRNAs. Required for the vegetal localization of vg1 mRNA. Probably required for nervous system development. This Xenopus laevis (African clawed frog) protein is ELAV-like protein 2 (elavl2).